Consider the following 372-residue polypeptide: Glutamate 5-kinase (372 aa).

Residue lysine 14 coordinates ATP. The substrate site is built by serine 54, aspartate 141, and asparagine 153. ATP is bound at residue 173–174 (TD). Residues 280 to 358 (RGTLVLDAGA…DAIESLLGYS (79 aa)) enclose the PUA domain.

The protein belongs to the glutamate 5-kinase family.

The protein localises to the cytoplasm. The catalysed reaction is L-glutamate + ATP = L-glutamyl 5-phosphate + ADP. The protein operates within amino-acid biosynthesis; L-proline biosynthesis; L-glutamate 5-semialdehyde from L-glutamate: step 1/2. Functionally, catalyzes the transfer of a phosphate group to glutamate to form L-glutamate 5-phosphate. This chain is Glutamate 5-kinase, found in Pseudomonas putida (strain W619).